The chain runs to 473 residues: ATP synthase subunit beta (473 aa).

153-160 (GGAGVGKT) lines the ATP pocket.

The protein belongs to the ATPase alpha/beta chains family. In terms of assembly, F-type ATPases have 2 components, CF(1) - the catalytic core - and CF(0) - the membrane proton channel. CF(1) has five subunits: alpha(3), beta(3), gamma(1), delta(1), epsilon(1). CF(0) has three main subunits: a(1), b(2) and c(9-12). The alpha and beta chains form an alternating ring which encloses part of the gamma chain. CF(1) is attached to CF(0) by a central stalk formed by the gamma and epsilon chains, while a peripheral stalk is formed by the delta and b chains.

Its subcellular location is the cell membrane. The catalysed reaction is ATP + H2O + 4 H(+)(in) = ADP + phosphate + 5 H(+)(out). Functionally, produces ATP from ADP in the presence of a proton gradient across the membrane. The catalytic sites are hosted primarily by the beta subunits. This Rickettsia africae (strain ESF-5) protein is ATP synthase subunit beta.